The sequence spans 1071 residues: DNA-directed RNA polymerase subunit beta (1071 aa).

This sequence belongs to the RNA polymerase beta chain family. In plastids the minimal PEP RNA polymerase catalytic core is composed of four subunits: alpha, beta, beta', and beta''. When a (nuclear-encoded) sigma factor is associated with the core the holoenzyme is formed, which can initiate transcription.

The protein resides in the plastid. It is found in the chloroplast. The enzyme catalyses RNA(n) + a ribonucleoside 5'-triphosphate = RNA(n+1) + diphosphate. Functionally, DNA-dependent RNA polymerase catalyzes the transcription of DNA into RNA using the four ribonucleoside triphosphates as substrates. The sequence is that of DNA-directed RNA polymerase subunit beta from Drimys granadensis.